The following is a 253-amino-acid chain: Probable transcriptional regulatory protein Tpet_0454 (253 aa).

The protein belongs to the TACO1 family.

The protein localises to the cytoplasm. This chain is Probable transcriptional regulatory protein Tpet_0454, found in Thermotoga petrophila (strain ATCC BAA-488 / DSM 13995 / JCM 10881 / RKU-1).